Consider the following 269-residue polypeptide: Phosphonoacetaldehyde hydrolase (269 aa).

The Nucleophile role is filled by Asp10. Positions 10 and 12 each coordinate Mg(2+). The active-site Schiff-base intermediate with substrate is Lys52. Position 186 (Asp186) interacts with Mg(2+).

The protein belongs to the HAD-like hydrolase superfamily. PhnX family. Homodimer. Mg(2+) is required as a cofactor.

The enzyme catalyses phosphonoacetaldehyde + H2O = acetaldehyde + phosphate + H(+). Its function is as follows. Involved in phosphonate degradation. The sequence is that of Phosphonoacetaldehyde hydrolase (phnX) from Salmonella typhimurium (strain LT2 / SGSC1412 / ATCC 700720).